The primary structure comprises 38 residues: Spheniscin-2 (38 aa).

3 disulfide bridges follow: cysteine 5–cysteine 33, cysteine 12–cysteine 27, and cysteine 17–cysteine 34.

As to quaternary structure, monomer. As to expression, secreted into the stomach cavity.

It is found in the secreted. Its function is as follows. Has antifungal activity and antibacterial activity against Gram-positive and Gram-negative bacteria. Involved in the process of food preservation in the stomach during the incubation fast. May also be present during infection. The chain is Spheniscin-2 from Aptenodytes patagonicus (King penguin).